A 199-amino-acid polypeptide reads, in one-letter code: Transcription factor 15 (199 aa).

Residues 25 to 67 (EENRSESDASDQSFGCCEGPEAARRGPGPGGGRRAGGGGGAGP) are disordered. The span at 51–66 (PGPGGGRRAGGGGGAG) shows a compositional bias: gly residues. Positions 72–124 (RQRQAANARERDRTQSVNTAFTALRTLIPTEPVDRKLSKIETVRLASSYIAHL) constitute a bHLH domain.

As to quaternary structure, heterodimer; efficient DNA binding requires dimerization with another bHLH protein, such as TCF3/E12. Interacts with MEOX2.

Its subcellular location is the nucleus. Its function is as follows. Early transcription factor that plays a key role in somitogenesis, paraxial mesoderm development and regulation of stem cell pluripotency. Essential for the mesenchymal to epithelial transition associated with somite formation. Required for somite morphogenesis, thereby regulating patterning of the axial skeleton and skeletal muscles. Required for proper localization of somite epithelium markers during the mesenchymal to epithelial transition. Also plays a key role in regulation of stem cell pluripotency. Promotes pluripotency exit of embryonic stem cells (ESCs) by priming ESCs for differentiation. Acts as a key regulator of self-renewal of hematopoietic stem cells (HSCs) by mediating HSCs quiescence and long-term self-renewal. Together with MEOX2, regulates transcription in heart endothelial cells to regulate fatty acid transport across heart endothelial cells. Acts by forming a heterodimer with another helix-loop-helix (bHLH) protein, such as TCF3/E12, that binds DNA on E-box motifs (5'-CANNTG-3') and activates transcription of target genes. This chain is Transcription factor 15, found in Homo sapiens (Human).